The chain runs to 307 residues: Transcription initiation factor IIB (307 aa).

Repeat copies occupy residues 123-206 and 217-298.

Belongs to the TFIIB family.

Functionally, stabilizes TBP binding to an archaeal box-A promoter. Also responsible for recruiting RNA polymerase II to the pre-initiation complex (DNA-TBP-TFIIB). In Sulfolobus acidocaldarius (strain ATCC 33909 / DSM 639 / JCM 8929 / NBRC 15157 / NCIMB 11770), this protein is Transcription initiation factor IIB.